The sequence spans 240 residues: Uridylate kinase (240 aa).

Residue 14–17 (KLSG) coordinates ATP. Residue glycine 56 participates in UMP binding. Residues glycine 57 and arginine 61 each coordinate ATP. Residues aspartate 76 and 137-144 (TGNPFFTT) each bind UMP. Threonine 164, tyrosine 170, and aspartate 173 together coordinate ATP.

Belongs to the UMP kinase family. Homohexamer.

Its subcellular location is the cytoplasm. It carries out the reaction UMP + ATP = UDP + ADP. It functions in the pathway pyrimidine metabolism; CTP biosynthesis via de novo pathway; UDP from UMP (UMPK route): step 1/1. With respect to regulation, inhibited by UTP. Its function is as follows. Catalyzes the reversible phosphorylation of UMP to UDP. This is Uridylate kinase from Paracidovorax citrulli (strain AAC00-1) (Acidovorax citrulli).